The primary structure comprises 478 residues: Cytochrome c-552 (478 aa).

Residues 1-27 (MKKQWTRRSAAAIAMVTTLLLSSHSFA) form the signal peptide. Histidine 91 contributes to the heme c binding site. Heme contacts are provided by cysteine 119, cysteine 122, and lysine 123. Cysteine 157, cysteine 160, histidine 161, cysteine 206, cysteine 209, and histidine 210 together coordinate heme c. Ca(2+) is bound by residues glutamate 212, tyrosine 213, lysine 258, and glutamine 260. Residue tyrosine 213 coordinates substrate. A substrate-binding site is contributed by histidine 261. Heme c-binding residues include histidine 272, cysteine 279, cysteine 282, histidine 283, histidine 298, cysteine 311, cysteine 314, histidine 315, and histidine 390.

It belongs to the cytochrome c-552 family. Ca(2+) is required as a cofactor. It depends on heme c as a cofactor.

It localises to the periplasm. It carries out the reaction 6 Fe(III)-[cytochrome c] + NH4(+) + 2 H2O = 6 Fe(II)-[cytochrome c] + nitrite + 8 H(+). Its pathway is nitrogen metabolism; nitrate reduction (assimilation). Catalyzes the reduction of nitrite to ammonia, consuming six electrons in the process. The polypeptide is Cytochrome c-552 (Aliivibrio salmonicida (strain LFI1238) (Vibrio salmonicida (strain LFI1238))).